The chain runs to 546 residues: 2-isopropylmalate synthase (546 aa).

Residues isoleucine 8–serine 271 form the Pyruvate carboxyltransferase domain. Mn(2+)-binding residues include aspartate 17, histidine 208, histidine 210, and asparagine 244. The interval glutamine 408–asparagine 546 is regulatory domain.

This sequence belongs to the alpha-IPM synthase/homocitrate synthase family. LeuA type 1 subfamily. In terms of assembly, homodimer. Mn(2+) is required as a cofactor.

It is found in the cytoplasm. It catalyses the reaction 3-methyl-2-oxobutanoate + acetyl-CoA + H2O = (2S)-2-isopropylmalate + CoA + H(+). Its pathway is amino-acid biosynthesis; L-leucine biosynthesis; L-leucine from 3-methyl-2-oxobutanoate: step 1/4. Its function is as follows. Catalyzes the condensation of the acetyl group of acetyl-CoA with 3-methyl-2-oxobutanoate (2-ketoisovalerate) to form 3-carboxy-3-hydroxy-4-methylpentanoate (2-isopropylmalate). This is 2-isopropylmalate synthase from Prochlorococcus marinus (strain MIT 9312).